The following is a 38-amino-acid chain: Cytochrome b6-f complex subunit 5 (38 aa).

Residues 5 to 25 (LLCGIVLGLIPVTLLGLFVAA) form a helical membrane-spanning segment.

The protein belongs to the PetG family. As to quaternary structure, the 4 large subunits of the cytochrome b6-f complex are cytochrome b6, subunit IV (17 kDa polypeptide, PetD), cytochrome f and the Rieske protein, while the 4 small subunits are PetG, PetL, PetM and PetN. The complex functions as a dimer.

It localises to the cellular thylakoid membrane. Component of the cytochrome b6-f complex, which mediates electron transfer between photosystem II (PSII) and photosystem I (PSI), cyclic electron flow around PSI, and state transitions. PetG is required for either the stability or assembly of the cytochrome b6-f complex. The sequence is that of Cytochrome b6-f complex subunit 5 from Parasynechococcus marenigrum (strain WH8102).